We begin with the raw amino-acid sequence, 442 residues long: Endothelin receptor type B (442 aa).

An N-terminal signal peptide occupies residues 1-26 (MQPPPSLCGRALVALVLACGLSRIWG). Over 27-101 (EERGFPPDRA…GPIEIKETFK (75 aa)) the chain is Extracellular. An N-linked (GlcNAc...) asparagine glycan is attached at Asn59. Positions 69–88 (AEVPKGDRTAGSPPRTISPP) are disordered. The chain crosses the membrane as a helical span at residues 102-126 (YINTVVSCLVFVLGIIGNSTLLRII). The Cytoplasmic portion of the chain corresponds to 127-137 (YKNKCMRNGPN). A helical membrane pass occupies residues 138-163 (ILIASLALGDLLHIVIDIPINVYKLL). The Extracellular portion of the chain corresponds to 164-175 (AEDWPFGAEMCK). Residues Cys174 and Cys255 are joined by a disulfide bond. Residues 176–197 (LVPFIQKASVGITVLSLCALSI) traverse the membrane as a helical segment. Residues 198 to 218 (DRYRAVASWSRIKGIGVPKWT) are Cytoplasmic-facing. A helical membrane pass occupies residues 219-243 (AVEIVLIWVVSVVLAVPEAIGFDII). Over 244–271 (TMDYKGSYLRICLLHPVQKTAFMQFYKT) the chain is Extracellular. Residues 272–296 (AKDWWLFSFYFCLPLAITAFFYTLM) form a helical membrane-spanning segment. Over 297–324 (TCEMLRKKSGMQIALNDHLKQRREVAKT) the chain is Cytoplasmic. At Ser305 the chain carries Phosphoserine. A helical membrane pass occupies residues 325–350 (VFCLVLVFALCWLPLHLSRILKLTLY). The Extracellular portion of the chain corresponds to 351 to 362 (NQNDPNRCELLS). A helical membrane pass occupies residues 363-389 (FLLVLDYIGINMASLNSCINPIALYLV). The Cytoplasmic segment spans residues 390-442 (SKRFKNCFKSCLCCWCQSFEEKQSLEEKQSCLKFKANDHGYDNFRSSNKYSSS). Residues Cys402, Cys403, and Cys405 are each lipidated (S-palmitoyl cysteine). Residue Ser419 is modified to Phosphoserine. Phosphotyrosine is present on Tyr439. Phosphoserine is present on residues Ser440, Ser441, and Ser442.

It belongs to the G-protein coupled receptor 1 family. Endothelin receptor subfamily. EDNRB sub-subfamily. In terms of processing, palmitoylation of Cys-402 was confirmed by the palmitoylation of Cys-402 in a deletion mutant lacking both Cys-403 and Cys-405. As to expression, expressed in placental stem villi vessels, but not in cultured placental villi smooth muscle cells.

The protein localises to the cell membrane. Non-specific receptor for endothelin 1, 2, and 3. Mediates its action by association with G proteins that activate a phosphatidylinositol-calcium second messenger system. The polypeptide is Endothelin receptor type B (Homo sapiens (Human)).